Consider the following 201-residue polypeptide: Holliday junction branch migration complex subunit RuvA (201 aa).

The tract at residues 1-63 (MISHFSGTVS…EESLTLYGFV (63 aa)) is domain I. Residues 64–142 (EADDRDAFEL…ALAPRGASAS (79 aa)) are domain II. The segment at 143–153 (GATHVAAPWRE) is flexible linker. Residues 153 to 201 (EQVAEGLVGLGWSTKDAEKAVDKVVALKEADPAMSIGNLMRAALRSLAR) are domain III.

This sequence belongs to the RuvA family. As to quaternary structure, homotetramer. Forms an RuvA(8)-RuvB(12)-Holliday junction (HJ) complex. HJ DNA is sandwiched between 2 RuvA tetramers; dsDNA enters through RuvA and exits via RuvB. An RuvB hexamer assembles on each DNA strand where it exits the tetramer. Each RuvB hexamer is contacted by two RuvA subunits (via domain III) on 2 adjacent RuvB subunits; this complex drives branch migration. In the full resolvosome a probable DNA-RuvA(4)-RuvB(12)-RuvC(2) complex forms which resolves the HJ.

The protein localises to the cytoplasm. Functionally, the RuvA-RuvB-RuvC complex processes Holliday junction (HJ) DNA during genetic recombination and DNA repair, while the RuvA-RuvB complex plays an important role in the rescue of blocked DNA replication forks via replication fork reversal (RFR). RuvA specifically binds to HJ cruciform DNA, conferring on it an open structure. The RuvB hexamer acts as an ATP-dependent pump, pulling dsDNA into and through the RuvAB complex. HJ branch migration allows RuvC to scan DNA until it finds its consensus sequence, where it cleaves and resolves the cruciform DNA. The protein is Holliday junction branch migration complex subunit RuvA of Cutibacterium acnes (strain DSM 16379 / KPA171202) (Propionibacterium acnes).